Consider the following 201-residue polypeptide: CMRF35-like molecule 7 (201 aa).

A signal peptide spans 1–17 (MWLPPALLLLSLSGCFS). The Ig-like V-type domain occupies 18-120 (IQGPESVRAP…PDLGTQVKVI (103 aa)). The Extracellular segment spans residues 18 to 151 (IQGPESVRAP…FIGSHKRNHY (134 aa)). An intrachain disulfide couples Cys-36 to Cys-104. A helical transmembrane segment spans residues 152-172 (MLLVFVKVPILLILVTAILWL). Residues 173–201 (KGSQRVPEEPGEQPIYMNFSEPLTKDMAT) are Cytoplasmic-facing. Tyr-188 bears the Phosphotyrosine; by FYN mark.

This sequence belongs to the CD300 family. In terms of assembly, interacts with TYROBP, which enhances cell surface expression and activation properties. Interacts with GRB2 in the presence of FYN. Phosphorylation on Tyr-188 by FYN is required for interaction with GRB2. In terms of tissue distribution, expressed exclusively in myeloid lineages.

It localises to the cell membrane. In terms of biological role, acts as an activating immune receptor through its interaction with ITAM-bearing adapter TYROBP, and also independently by recruitment of GRB2. This is CMRF35-like molecule 7 (CD300LB) from Homo sapiens (Human).